The primary structure comprises 81 residues: Large ribosomal subunit protein uL29c (81 aa).

Belongs to the universal ribosomal protein uL29 family.

It localises to the plastid. The protein resides in the chloroplast. This chain is Large ribosomal subunit protein uL29c, found in Phaeodactylum tricornutum (strain CCAP 1055/1).